We begin with the raw amino-acid sequence, 430 residues long: UDP-N-acetylglucosamine 1-carboxyvinyltransferase (430 aa).

22–23 (KN) provides a ligand contact to phosphoenolpyruvate. UDP-N-acetyl-alpha-D-glucosamine is bound at residue Arg-102. The active-site Proton donor is the Cys-126. A 2-(S-cysteinyl)pyruvic acid O-phosphothioketal modification is found at Cys-126. Residues 131 to 135 (RPVDL), 172 to 175 (KVSV), Asp-317, and Ile-339 contribute to the UDP-N-acetyl-alpha-D-glucosamine site.

It belongs to the EPSP synthase family. MurA subfamily.

The protein localises to the cytoplasm. The catalysed reaction is phosphoenolpyruvate + UDP-N-acetyl-alpha-D-glucosamine = UDP-N-acetyl-3-O-(1-carboxyvinyl)-alpha-D-glucosamine + phosphate. The protein operates within cell wall biogenesis; peptidoglycan biosynthesis. In terms of biological role, cell wall formation. Adds enolpyruvyl to UDP-N-acetylglucosamine. This Rhizobium etli (strain ATCC 51251 / DSM 11541 / JCM 21823 / NBRC 15573 / CFN 42) protein is UDP-N-acetylglucosamine 1-carboxyvinyltransferase.